The sequence spans 519 residues: MNLPIVNERNRPDVPRKGVQKIRTVIEGFDEITHGGLPIGRTTLVSGTSGTGKTLLAVQFLYQGIHHFDYPGLFITFEESPSDIIENAYSFGWDLQQLIDDGKLFILDASPDPEGQEVVGTFDLSALIERIQYAVRKYKAKLVSIDSVTAVFQQYDAASVVRREIFRLVARLKQLQVTSIMTTERVEEYGPIARFGVEEFVSDNVVVLRNVLEGERRRRTVEILKLRGTTHMKGEYPFTITHDGINIFPLGAMRLTQRSSNARISSGVQTLDEMCGGGFFKDSIILATGATGTGKTLLVSKFLQEGCRQRERAILFAYEESRAQLSRNASSWGIDFEEMEHKGLLKLLCTYPESAGLEDHLQMIKSEISEFKPSRIAIDSLSALARGVTNNAFRQFVIGVTGYAKQEEITGFFTNTTDQFMGAHSITESHISTITDTILMLQYVEIRGEMSRALNVFKMRGSWHDKGIREYSISHDGPDIRDSFRNYERIISGSPTRISVDEKSELSRIVRGVKDKTAE.

KaiC domains follow at residues 1 to 248 (MNLP…INIF) and 262 to 519 (ARIS…KTAE). 20 residues coordinate ATP: G50, T51, G52, K53, T54, L55, S90, K225, L226, R227, T229, H231, T241, T291, G292, T293, G294, K295, T296, and L297. T54 lines the Mg(2+) pocket. T296 contacts Mg(2+). E319 is a binding site for Mg(2+). W332 contributes to the ATP binding site. The residue at position 432 (S432) is a Phosphoserine; by autocatalysis. T433 carries the phosphothreonine; by autocatalysis modification. ATP-binding residues include R452, K458, M459, R460, S462, H464, and K466.

Belongs to the KaiC family. In terms of assembly, homohexamer; hexamerization is dependent on ATP-binding. Core component of the KaiABC complex, at least composed of a KaiC homohexamer, a KaiB dimer and two KaiA dimers. Interacts directly with SasA. Multimerizes, probably forming homohexamers, no interaction with KaiC2 or KaiC3 is seen. Interacts with KaiA. In another study interacts with itself, KaiB1, KaiB3 and KaiC3. Interacts with SasA (hik8). The cofactor is Mg(2+). In terms of processing, phosphorylated on serine and threonine residues by autocatalysis. Has a 4 step phosphorylation cycle; the autokinase acts first on Thr-433, then Ser-432. When Ser-432 is modified KaiC switches to an autophosphatase mode, acting first on phospho-Thr-433 then phospho-Ser-432.

The enzyme catalyses L-seryl-[protein] + ATP = O-phospho-L-seryl-[protein] + ADP + H(+). It carries out the reaction L-threonyl-[protein] + ATP = O-phospho-L-threonyl-[protein] + ADP + H(+). The catalysed reaction is ATP + H2O = ADP + phosphate + H(+). With respect to regulation, the interaction with KaiA enhances its phosphorylation status, while the interaction with KaiB decreases it. Functionally, component of the oscillator and circadian clock in this organism, enhances fitness in a rhythmic environment. Autophosphorylates in the presence of KaiA, no activity is seen in its absence. Its function is as follows. Central component of the KaiABC oscillator complex, which constitutes the main circadian regulator in cyanobacteria. Complex composition changes during the circadian cycle to control KaiC phosphorylation. KaiA stimulates KaiC autophosphorylation, while KaiB sequesters KaiA, leading to KaiC autodephosphorylation. Clock output pathways impact the RpaA transcriptional regulator. KaiC enhances the autophosphorylation activity of SasA, which then transfers its phosphate group to RpaA to activate it. KaiB and KaiC together enhance the phospho-RpaA dephosphatase activity of CikA. In terms of biological role, has a weak, temperature-independent ATPase activity; ATPase activity defines the circadian period. The phosphorylation state of KaiC modulates its ATPase activity and effects KaiB binding. The polypeptide is Circadian clock oscillator protein KaiC 1 (Synechocystis sp. (strain ATCC 27184 / PCC 6803 / Kazusa)).